A 293-amino-acid chain; its full sequence is ATP synthase gamma chain (293 aa).

This sequence belongs to the ATPase gamma chain family. As to quaternary structure, F-type ATPases have 2 components, CF(1) - the catalytic core - and CF(0) - the membrane proton channel. CF(1) has five subunits: alpha(3), beta(3), gamma(1), delta(1), epsilon(1). CF(0) has three main subunits: a, b and c.

The protein localises to the cell inner membrane. In terms of biological role, produces ATP from ADP in the presence of a proton gradient across the membrane. The gamma chain is believed to be important in regulating ATPase activity and the flow of protons through the CF(0) complex. This chain is ATP synthase gamma chain, found in Chlorobium chlorochromatii (strain CaD3).